The sequence spans 1429 residues: Probable ATP-dependent RNA helicase spindle-E (1429 aa).

A Helicase ATP-binding domain is found at 121–288 (VNAINTHQVV…FSTKVSVPPV (168 aa)). 134–141 (GETGCGKT) provides a ligand contact to ATP. Positions 234-237 (DEVH) match the DEAH box motif. One can recognise a Helicase C-terminal domain in the interval 349–521 (QSEQSYDDAK…NSVLKAKLLD (173 aa)). The 64-residue stretch at 933-996 (AGVLTKGMMV…RLMTKELLSQ (64 aa)) folds into the Tudor domain.

This sequence belongs to the DEAD box helicase family. DEAH subfamily.

It is found in the cytoplasm. It carries out the reaction ATP + H2O = ADP + phosphate + H(+). Its function is as follows. Probable ATP-binding RNA helicase which plays a central role during spermatogenesis and oogenesis by repressing transposable elements and preventing their mobilization, which is essential for the germline integrity. Acts via the piRNA metabolic process, which mediates the repression of transposable elements during meiosis by forming complexes composed of piRNAs and Piwi and govern the methylation and subsequent repression of transposons. Involved in the repression of LTR retrotransposon copia. Also involved in telomere regulation by repressing specialized telomeric retroelements HeT-A, TAHRE, and TART; Drosophila telomeres being maintained by transposition of specialized telomeric retroelements. Involved in telomeric trans-silencing, a repression mechanism by which a transposon or a transgene inserted in subtelomeric heterochromatin has the capacity to repress in trans in the female germline, a homologous transposon, or transgene located in euchromatin. Involved in the repression of testis-expressed Stellate genes by the homologous Su(Ste) repeats. Required for anteroposterior and dorsoventral axis formation during oogenesis. The chain is Probable ATP-dependent RNA helicase spindle-E (spn-E) from Drosophila ananassae (Fruit fly).